A 105-amino-acid polypeptide reads, in one-letter code: Secreted RxLR effector protein 158 (105 aa).

The signal sequence occupies residues 1 to 22 (MRGAHYVAIVLLVAAGGQTAAG). The RxLR-dEER signature appears at 50–71 (RALQASRNPKDDLMFSAGDEER).

This sequence belongs to the RxLR effector family.

The protein localises to the secreted. It localises to the host nucleus. Its subcellular location is the host cytoplasm. Functionally, secreted effector that partially suppresses the host cell death induced by cell death-inducing proteins. The protein is Secreted RxLR effector protein 158 of Plasmopara viticola (Downy mildew of grapevine).